The primary structure comprises 465 residues: MKHIVKQIHFVGIGGAGMSGIAEVLVNLGYEVSGSDLSRNAVTDRLEALGARIAIGHDAANIAGANAVVVSTAVRSDNPEVLAARHQGVPIVQRAVMLAELMRLKQGIAIAGTHGKTTTTSLVASVLAAGGLDPTFVIGGRLISAGANARLGTGDFIVAEADESDASFLNLYPVIEVITNIDADHMDTYGHDFARLKQAFIEFTQRLPFYGSAVVCVDDPNVRQIIPFISKPVVRYGLSPDAQVRAEDIDARDGRMHFTVIREGRAPLAVVLNLPGLHNVQNALAAIAIATDLGVSDDAIQQALAEFNGVGRRFQRYGEVPSADGGQYTLIDDYGHHPVEMAATVAAARGAFPGRRLVLAFQPHRYTRTRDCFDDFVNVLSTVDALVLTEVYAAGEAAITTANGDALSRALRAVGRVDPVFVASVDDVPDALAGVARNGDVVITMGAGSIGGVPAKIVQHIQQKA.

112–118 is a binding site for ATP; sequence GTHGKTT.

The protein belongs to the MurCDEF family.

It is found in the cytoplasm. The catalysed reaction is UDP-N-acetyl-alpha-D-muramate + L-alanine + ATP = UDP-N-acetyl-alpha-D-muramoyl-L-alanine + ADP + phosphate + H(+). It functions in the pathway cell wall biogenesis; peptidoglycan biosynthesis. Functionally, cell wall formation. The sequence is that of UDP-N-acetylmuramate--L-alanine ligase from Burkholderia ambifaria (strain ATCC BAA-244 / DSM 16087 / CCUG 44356 / LMG 19182 / AMMD) (Burkholderia cepacia (strain AMMD)).